Reading from the N-terminus, the 492-residue chain is Serine/threonine-protein kinase 3 (492 aa).

The Protein kinase domain occupies 26 to 277 (FDVLEKLGEG…ATQLLQHPFI (252 aa)). ATP-binding positions include 32–40 (LGEGSYGSV) and Lys55. Residue Asp145 is the Proton acceptor of the active site. Thr179 is modified (phosphothreonine; by autocatalysis). Coiled-coil stretches lie at residues 286–328 (LRDL…TMVK) and 443–476 (NLDFEELQMRLTALDPMMEREIEELRQRYTAKRQ). A compositionally biased stretch (basic and acidic residues) spans 297 to 307 (KAKRQQEQQRE). Residues 297-339 (KAKRQQEQQRELEEDDENSEEEVEVDSHTMVKSGSESAGTMRA) are disordered. Positions 308–320 (LEEDDENSEEEVE) are enriched in acidic residues. A compositionally biased stretch (polar residues) spans 326-339 (MVKSGSESAGTMRA). In terms of domain architecture, SARAH spans 438-485 (FDFLKNLDFEELQMRLTALDPMMEREIEELRQRYTAKRQPILDAMDAK).

Belongs to the protein kinase superfamily. STE Ser/Thr protein kinase family. STE20 subfamily. As to quaternary structure, homodimer; mediated via the coiled-coil region. It depends on Mg(2+) as a cofactor.

Its subcellular location is the cytoplasm. The protein localises to the nucleus. The catalysed reaction is L-seryl-[protein] + ATP = O-phospho-L-seryl-[protein] + ADP + H(+). It catalyses the reaction L-threonyl-[protein] + ATP = O-phospho-L-threonyl-[protein] + ADP + H(+). With respect to regulation, inhibited by the C-terminal non-catalytic region. Activated by caspase-cleavage. Full activation also requires homodimerization and autophosphorylation of Thr-179. Its function is as follows. Stress-activated, pro-apoptotic kinase which, following caspase-cleavage, enters the nucleus and induces chromatin condensation followed by internucleosomal DNA fragmentation. Key component of the Hippo signaling pathway which plays a pivotal role in organ size control and tumor suppression by restricting proliferation and promoting apoptosis. The core of this pathway is composed of a kinase cascade wherein stk3/mst2 and stk4/mst1, in complex with its regulatory protein sav1, phosphorylates and activates lats1/2 in complex with its regulatory protein mob1, which in turn phosphorylates and inactivates yap1 oncoprotein and wwtr1/taz. Phosphorylation of yap1 by lats2 inhibits its translocation into the nucleus to regulate cellular genes important for cell proliferation, cell death, and cell migration. This chain is Serine/threonine-protein kinase 3 (stk3), found in Danio rerio (Zebrafish).